The chain runs to 452 residues: Bifunctional protein GlmU (452 aa).

The tract at residues 1–230 (MSRSRSAIIL…ADEVLGVNSR (230 aa)) is pyrophosphorylase. UDP-N-acetyl-alpha-D-glucosamine-binding positions include 10-13 (LAAG), Lys-24, Gln-75, and 80-81 (GT). Residue Asp-105 coordinates Mg(2+). Gly-141, Glu-156, Asn-171, and Asn-228 together coordinate UDP-N-acetyl-alpha-D-glucosamine. Residue Asn-228 participates in Mg(2+) binding. The linker stretch occupies residues 231–251 (ADLAEAEAAFQSRMRQSMMAD). The segment at 252–452 (GVTLIAPETV…ARKARKDSQT (201 aa)) is N-acetyltransferase. Residues Arg-317 and Lys-335 each coordinate UDP-N-acetyl-alpha-D-glucosamine. His-347 acts as the Proton acceptor in catalysis. UDP-N-acetyl-alpha-D-glucosamine contacts are provided by Tyr-350 and Asn-361. Residues Ala-364, 370–371 (NY), Ser-389, Thr-407, and Arg-424 contribute to the acetyl-CoA site.

This sequence in the N-terminal section; belongs to the N-acetylglucosamine-1-phosphate uridyltransferase family. It in the C-terminal section; belongs to the transferase hexapeptide repeat family. Homotrimer. Requires Mg(2+) as cofactor.

The protein resides in the cytoplasm. It catalyses the reaction alpha-D-glucosamine 1-phosphate + acetyl-CoA = N-acetyl-alpha-D-glucosamine 1-phosphate + CoA + H(+). The enzyme catalyses N-acetyl-alpha-D-glucosamine 1-phosphate + UTP + H(+) = UDP-N-acetyl-alpha-D-glucosamine + diphosphate. It participates in nucleotide-sugar biosynthesis; UDP-N-acetyl-alpha-D-glucosamine biosynthesis; N-acetyl-alpha-D-glucosamine 1-phosphate from alpha-D-glucosamine 6-phosphate (route II): step 2/2. Its pathway is nucleotide-sugar biosynthesis; UDP-N-acetyl-alpha-D-glucosamine biosynthesis; UDP-N-acetyl-alpha-D-glucosamine from N-acetyl-alpha-D-glucosamine 1-phosphate: step 1/1. The protein operates within bacterial outer membrane biogenesis; LPS lipid A biosynthesis. In terms of biological role, catalyzes the last two sequential reactions in the de novo biosynthetic pathway for UDP-N-acetylglucosamine (UDP-GlcNAc). The C-terminal domain catalyzes the transfer of acetyl group from acetyl coenzyme A to glucosamine-1-phosphate (GlcN-1-P) to produce N-acetylglucosamine-1-phosphate (GlcNAc-1-P), which is converted into UDP-GlcNAc by the transfer of uridine 5-monophosphate (from uridine 5-triphosphate), a reaction catalyzed by the N-terminal domain. This chain is Bifunctional protein GlmU, found in Maricaulis maris (strain MCS10) (Caulobacter maris).